Consider the following 179-residue polypeptide: Large ribosomal subunit protein uL6 (179 aa).

It belongs to the universal ribosomal protein uL6 family. In terms of assembly, part of the 50S ribosomal subunit.

In terms of biological role, this protein binds to the 23S rRNA, and is important in its secondary structure. It is located near the subunit interface in the base of the L7/L12 stalk, and near the tRNA binding site of the peptidyltransferase center. The polypeptide is Large ribosomal subunit protein uL6 (Chlorobium phaeovibrioides (strain DSM 265 / 1930) (Prosthecochloris vibrioformis (strain DSM 265))).